A 163-amino-acid polypeptide reads, in one-letter code: NADH-quinone oxidoreductase subunit I (163 aa).

2 consecutive 4Fe-4S ferredoxin-type domains span residues 53–83 and 94–123; these read LRRY…IEAG and TRYD…EGPN. Positions 63, 66, 69, 73, 103, 106, 109, and 113 each coordinate [4Fe-4S] cluster.

Belongs to the complex I 23 kDa subunit family. NDH-1 is composed of 14 different subunits. Subunits NuoA, H, J, K, L, M, N constitute the membrane sector of the complex. [4Fe-4S] cluster serves as cofactor.

The protein resides in the cell inner membrane. It carries out the reaction a quinone + NADH + 5 H(+)(in) = a quinol + NAD(+) + 4 H(+)(out). Functionally, NDH-1 shuttles electrons from NADH, via FMN and iron-sulfur (Fe-S) centers, to quinones in the respiratory chain. The immediate electron acceptor for the enzyme in this species is believed to be ubiquinone. Couples the redox reaction to proton translocation (for every two electrons transferred, four hydrogen ions are translocated across the cytoplasmic membrane), and thus conserves the redox energy in a proton gradient. The sequence is that of NADH-quinone oxidoreductase subunit I from Parvibaculum lavamentivorans (strain DS-1 / DSM 13023 / NCIMB 13966).